Here is a 305-residue protein sequence, read N- to C-terminus: UDP-3-O-acyl-N-acetylglucosamine deacetylase (305 aa).

H78, H237, and D241 together coordinate Zn(2+). Residue H264 is the Proton donor of the active site.

Belongs to the LpxC family. Requires Zn(2+) as cofactor.

It carries out the reaction a UDP-3-O-[(3R)-3-hydroxyacyl]-N-acetyl-alpha-D-glucosamine + H2O = a UDP-3-O-[(3R)-3-hydroxyacyl]-alpha-D-glucosamine + acetate. The protein operates within glycolipid biosynthesis; lipid IV(A) biosynthesis; lipid IV(A) from (3R)-3-hydroxytetradecanoyl-[acyl-carrier-protein] and UDP-N-acetyl-alpha-D-glucosamine: step 2/6. Catalyzes the hydrolysis of UDP-3-O-myristoyl-N-acetylglucosamine to form UDP-3-O-myristoylglucosamine and acetate, the committed step in lipid A biosynthesis. The chain is UDP-3-O-acyl-N-acetylglucosamine deacetylase from Burkholderia thailandensis (strain ATCC 700388 / DSM 13276 / CCUG 48851 / CIP 106301 / E264).